Here is a 226-residue protein sequence, read N- to C-terminus: Ribonuclease 3 (226 aa).

Positions 6–128 (INRLQRKLGY…LIGGVFLDSN (123 aa)) constitute an RNase III domain. Position 41 (Glu41) interacts with Mg(2+). Residue Asp45 is part of the active site. 2 residues coordinate Mg(2+): Asp114 and Glu117. Glu117 is a catalytic residue. The DRBM domain occupies 155–225 (DPKTRLQEYL…AEQALKKLEL (71 aa)).

This sequence belongs to the ribonuclease III family. Homodimer. It depends on Mg(2+) as a cofactor.

The protein resides in the cytoplasm. The enzyme catalyses Endonucleolytic cleavage to 5'-phosphomonoester.. In terms of biological role, digests double-stranded RNA. Involved in the processing of primary rRNA transcript to yield the immediate precursors to the large and small rRNAs (23S and 16S). Processes some mRNAs, and tRNAs when they are encoded in the rRNA operon. Processes pre-crRNA and tracrRNA of type II CRISPR loci if present in the organism. The protein is Ribonuclease 3 of Salmonella typhi.